An 88-amino-acid polypeptide reads, in one-letter code: Small ribosomal subunit protein bS16 (88 aa).

It belongs to the bacterial ribosomal protein bS16 family.

This is Small ribosomal subunit protein bS16 from Geobacter metallireducens (strain ATCC 53774 / DSM 7210 / GS-15).